The primary structure comprises 561 residues: Putative transport protein YbjL (561 aa).

The next 5 helical transmembrane spans lie at 8–28 (LLNG…LCLG), 32–52 (LGSI…LLGQ), 66–86 (FMLF…SIFF), 94–114 (MLAL…GKLF), and 158–178 (NLSL…IVGA). 2 RCK C-terminal domains span residues 200-288 (RGLD…SFRN) and 292-373 (VFDR…RIGF). 5 helical membrane-spanning segments follow: residues 383 to 403 (LLAF…TFQF), 406 to 426 (FSFG…LGFM), 451 to 471 (VFMA…LGAI), 475 to 495 (MLIA…LFGA), and 540 to 560 (AIAN…WPGL).

Belongs to the AAE transporter (TC 2.A.81) family. YbjL subfamily.

Its subcellular location is the cell membrane. This is Putative transport protein YbjL from Shigella flexneri.